Reading from the N-terminus, the 219-residue chain is Beta-crystallin B2 (219 aa).

N-acetylalanine is present on Ala2. An N-terminal arm region spans residues 2 to 16 (ASEHQMPASKQQPAS). Beta/gamma crystallin 'Greek key' domains lie at 17 to 56 (PNIA…LVHS) and 57 to 101 (GPWV…RPIK). The interval 102–120 (VVRAPRQPLPTRQTKDSQE) is connecting peptide. 2 consecutive Beta/gamma crystallin 'Greek key' domains span residues 121–162 (HKIV…RVQS) and 163–205 (GTWV…RRIR). Residues 207-219 (MQWHQRGAYHPSN) are C-terminal arm.

Belongs to the beta/gamma-crystallin family. In terms of assembly, homo/heterodimer, or complexes of higher-order. The structure of beta-crystallin oligomers seems to be stabilized through interactions between the N-terminal arms.

Crystallins are the dominant structural components of the vertebrate eye lens. The protein is Beta-crystallin B2 (CRYBB2) of Gallus gallus (Chicken).